The following is a 246-amino-acid chain: LexA repressor (246 aa).

Positions Met1–Arg34 are disordered. A DNA-binding region (H-T-H motif) is located at residues Met52–Lys72. Residues Ser170 and Lys207 each act as for autocatalytic cleavage activity in the active site.

It belongs to the peptidase S24 family. In terms of assembly, homodimer.

The catalysed reaction is Hydrolysis of Ala-|-Gly bond in repressor LexA.. Its function is as follows. Represses a number of genes involved in the response to DNA damage (SOS response), including recA and lexA. In the presence of single-stranded DNA, RecA interacts with LexA causing an autocatalytic cleavage which disrupts the DNA-binding part of LexA, leading to derepression of the SOS regulon and eventually DNA repair. The sequence is that of LexA repressor from Nocardioides sp. (strain ATCC BAA-499 / JS614).